The following is a 418-amino-acid chain: Inner capsid protein sigma-2 (418 aa).

The protein belongs to the orthoreovirus sigma-1 protein family. Interacts with protein mu-NS; in viral inclusions.

Its subcellular location is the virion. Functionally, inner capsid (core) component. The sequence is that of Inner capsid protein sigma-2 (S2) from Mammalia (T1L).